Here is a 211-residue protein sequence, read N- to C-terminus: Ferritin heavy chain (211 aa).

Residues 1 to 20 (MKAVLFAVAALLAVCIPISA) form the signal peptide. Residues 35-191 (ITMQQSCRGS…GKASTLKKML (157 aa)) form the Ferritin-like diiron domain. Cys41 and Cys150 are oxidised to a cystine. Fe cation is bound by residues Glu52, Glu87, His90, Glu136, and Gln173.

Belongs to the ferritin family. Oligomer of 12 light (L) chains and 12 heavy (H) chains; L and H chains are disulfide-linked. The functional molecule forms a roughly spherical shell with a diameter of 12 nm and contains a central cavity into which the insoluble ferric iron core is deposited.

It is found in the golgi apparatus. It localises to the secreted. It catalyses the reaction 4 Fe(2+) + O2 + 4 H(+) = 4 Fe(3+) + 2 H2O. Stores iron in a soluble, non-toxic, readily available form. Important for iron homeostasis. Iron is taken up in the ferrous form and deposited as ferric hydroxides after oxidation. Ferritin is composed of a heavy (H) chain which is responsible for the oxidation and uptake of ferrous iron, and a light (L) chain which facilitates the nucleation of the ferrihydrite iron core. This Papilio xuthus (Asian swallowtail butterfly) protein is Ferritin heavy chain.